We begin with the raw amino-acid sequence, 110 residues long: Large ribosomal subunit protein P2B (110 aa).

The span at Thr73–Ala88 shows a compositional bias: low complexity. A disordered region spans residues Thr73 to Asp110. Acidic residues predominate over residues Ala91 to Met104. Ser100 carries the phosphoserine modification.

This sequence belongs to the eukaryotic ribosomal protein P1/P2 family. In terms of assembly, component of the large ribosomal subunit (LSU). Mature yeast ribosomes consist of a small (40S) and a large (60S) subunit. The 40S small subunit contains 1 molecule of ribosomal RNA (18S rRNA) and at least 33 different proteins. The large 60S subunit contains 3 rRNA molecules (25S, 5.8S and 5S rRNA) and at least 46 different proteins. The acidic ribosomal P-proteins form the stalk structure of the 60S subunit. They are organized as a pentameric complex in which uL10/P0 interacts with 2 heterodimers of P1 and P2 proteins.

The protein resides in the cytoplasm. Component of the ribosome, a large ribonucleoprotein complex responsible for the synthesis of proteins in the cell. The small ribosomal subunit (SSU) binds messenger RNAs (mRNAs) and translates the encoded message by selecting cognate aminoacyl-transfer RNA (tRNA) molecules. The large subunit (LSU) contains the ribosomal catalytic site termed the peptidyl transferase center (PTC), which catalyzes the formation of peptide bonds, thereby polymerizing the amino acids delivered by tRNAs into a polypeptide chain. The nascent polypeptides leave the ribosome through a tunnel in the LSU and interact with protein factors that function in enzymatic processing, targeting, and the membrane insertion of nascent chains at the exit of the ribosomal tunnel. The sequence is that of Large ribosomal subunit protein P2B (rpp202) from Schizosaccharomyces pombe (strain 972 / ATCC 24843) (Fission yeast).